The chain runs to 296 residues: Bifunctional protein FolD (296 aa).

NADP(+) is bound by residues 169 to 171 (GRG), threonine 196, and valine 237.

The protein belongs to the tetrahydrofolate dehydrogenase/cyclohydrolase family. Homodimer.

It catalyses the reaction (6R)-5,10-methylene-5,6,7,8-tetrahydrofolate + NADP(+) = (6R)-5,10-methenyltetrahydrofolate + NADPH. The enzyme catalyses (6R)-5,10-methenyltetrahydrofolate + H2O = (6R)-10-formyltetrahydrofolate + H(+). It functions in the pathway one-carbon metabolism; tetrahydrofolate interconversion. Catalyzes the oxidation of 5,10-methylenetetrahydrofolate to 5,10-methenyltetrahydrofolate and then the hydrolysis of 5,10-methenyltetrahydrofolate to 10-formyltetrahydrofolate. In Kocuria rhizophila (strain ATCC 9341 / DSM 348 / NBRC 103217 / DC2201), this protein is Bifunctional protein FolD.